We begin with the raw amino-acid sequence, 70 residues long: Large ribosomal subunit protein eL38 (70 aa).

A Glycyl lysine isopeptide (Lys-Gly) (interchain with G-Cter in SUMO2) cross-link involves residue K4. K9 is subject to N6-acetyllysine; alternate. K9 is covalently cross-linked (Glycyl lysine isopeptide (Lys-Gly) (interchain with G-Cter in SUMO2); alternate). N6-acetyllysine is present on K67.

This sequence belongs to the eukaryotic ribosomal protein eL38 family. In terms of assembly, component of the large ribosomal subunit.

It localises to the cytoplasm. In terms of biological role, component of the large ribosomal subunit. The ribosome is a large ribonucleoprotein complex responsible for the synthesis of proteins in the cell. This chain is Large ribosomal subunit protein eL38 (Rpl38), found in Mus musculus (Mouse).